The sequence spans 91 residues: Large ribosomal subunit protein eL37 (91 aa).

Zn(2+)-binding residues include Cys19, Cys22, Cys34, and Cys37. Residues 19 to 37 (CKRCGKSSFHIQKKRCASC) form a C4-type zinc finger.

It belongs to the eukaryotic ribosomal protein eL37 family. Zn(2+) serves as cofactor.

Functionally, binds to the 23S rRNA. The sequence is that of Large ribosomal subunit protein eL37 from Caenorhabditis elegans.